The following is a 510-amino-acid chain: Cytochrome P450 4A6 (510 aa).

A propeptide spanning residues 1–4 is cleaved from the precursor; the sequence is MSVS. Glu-321 and Cys-457 together coordinate heme.

It belongs to the cytochrome P450 family. Heme serves as cofactor. Liver; kidney.

It is found in the endoplasmic reticulum membrane. It localises to the microsome membrane. It carries out the reaction an omega-methyl-long-chain fatty acid + reduced [NADPH--hemoprotein reductase] + O2 = an omega-hydroxy-long-chain fatty acid + oxidized [NADPH--hemoprotein reductase] + H2O + H(+). Functionally, cytochromes P450 are a group of heme-thiolate monooxygenases. In liver microsomes, this enzyme is involved in an NADPH-dependent electron transport pathway. It oxidizes a variety of structurally unrelated compounds, including steroids, fatty acids, and xenobiotics. Its function is as follows. The kidney P-450 system is rather specialized for the omega-hydroxylation of fatty acids. Both P450-KA1 and P450-KA2 catalyze the omega- and (omega-1)-hydroxylation of various fatty acids with no drug-metabolizing activity, and hydroxylate prostaglandin A1 and A2 solely at the omega-position. In Oryctolagus cuniculus (Rabbit), this protein is Cytochrome P450 4A6 (CYP4A6).